A 561-amino-acid polypeptide reads, in one-letter code: TBC1 domain family member 24 (561 aa).

Lys-36 and Arg-40 together coordinate a 1,2-diacyl-sn-glycero-3-phospho-(1D-myo-inositol). One can recognise a Rab-GAP TBC domain in the interval 45 to 236 (AQSHTLRGKV…RVFDVFLVEG (192 aa)). A 1,2-diacyl-sn-glycero-3-phospho-(1D-myo-inositol)-binding positions include Lys-238, Arg-242, and 293–297 (RLFSR). The 214-residue stretch at 343–556 (EIVSVKEMRD…IAAVEAWGFQ (214 aa)) folds into the TLDc domain. Ser-475 and Ser-482 each carry phosphoserine.

In terms of assembly, interacts with ARF6. As to expression, expressed in brain, particularly at the level of the cortex and the hippocampus. Expressed in the inner ear in spiral ganglion cells, a collection of neurons critical for hearing and balance.

Its subcellular location is the cell membrane. The protein resides in the cytoplasm. It localises to the cytoplasmic vesicle membrane. The protein localises to the presynapse. Functionally, may act as a GTPase-activating protein for Rab family protein(s). Involved in neuronal projections development, probably through a negative modulation of ARF6 function. Involved in the regulation of synaptic vesicle trafficking. The polypeptide is TBC1 domain family member 24 (Tbc1d24) (Mus musculus (Mouse)).